A 788-amino-acid chain; its full sequence is Endonuclease MutS2 (788 aa).

332–339 (GPNTGGKT) contributes to the ATP binding site. Residues 713–788 (VDLRGMDAEE…GTGVTVVELK (76 aa)) form the Smr domain.

This sequence belongs to the DNA mismatch repair MutS family. MutS2 subfamily. As to quaternary structure, homodimer. Binds to stalled ribosomes, contacting rRNA.

Endonuclease that is involved in the suppression of homologous recombination and thus may have a key role in the control of bacterial genetic diversity. In terms of biological role, acts as a ribosome collision sensor, splitting the ribosome into its 2 subunits. Detects stalled/collided 70S ribosomes which it binds and splits by an ATP-hydrolysis driven conformational change. Acts upstream of the ribosome quality control system (RQC), a ribosome-associated complex that mediates the extraction of incompletely synthesized nascent chains from stalled ribosomes and their subsequent degradation. Probably generates substrates for RQC. This chain is Endonuclease MutS2, found in Clostridium botulinum (strain Okra / Type B1).